A 495-amino-acid polypeptide reads, in one-letter code: MGTEAEQPSPPSPPAQQQEQTNPPLWNAQNQKPARLYRLVLFFIAGSLAAWTIHALSNSNLVWKLRQLHHLPTAHYLQTRDEFAVYSVEELNAFKEIYDKSVSDSVGASYTKDEQTSINEALVSLRMAQDMYLAGKDDKASRLFEHALALAPRHPEVLLRYGEFLEHSQRNIVLADQYYFQALTISPSNSEALANRQRTADVVQTLDERRLQSLDSKRDALSAIHESNGALRRAKKEAYFQHIYHSVGIEGNTMTLAQTRSILETRMAVDGKSIDEHNEILGMDLAMKYINASLVQKIDITIKDILELHRRVLGHVDPIEGGEFRRNQVYVGGHVPPGPGDLALLMQRFERWLNSEHSSTLHPVNYAALAHYKLVHIHPFIDGNGRTSRLLMNTLLMRAGYPPVIIPKQQRNKYYHFLKLANEGDIRPFVRFIADCTEKTLDLYLWATSDLPQQIPMLIQTESEAGERLAQMQSPNVAQRSSILEFYESGSGALP.

A disordered region spans residues 1–27; that stretch reads MGTEAEQPSPPSPPAQQQEQTNPPLWN. The helical transmembrane segment at 36 to 55 threads the bilayer; it reads LYRLVLFFIAGSLAAWTIHA. 2 TPR repeats span residues 121 to 154 and 155 to 189; these read ALVSLRMAQDMYLAGKDDKASRLFEHALALAPRH and PEVLLRYGEFLEHSQRNIVLADQYYFQALTISPSN. Positions 246 to 251 match the Inhibitory (S/T)XXXE(G/N) motif motif; the sequence is SVGIEG. Residues E250 and 331–334 contribute to the ATP site; that span reads VGGH. Positions 300-435 constitute a Fido domain; it reads ITIKDILELH…IRPFVRFIAD (136 aa). Residue H378 is part of the active site. Residues 382 to 389, 414 to 415, and N422 each bind ATP; these read DGNGRTSR and YY.

This sequence belongs to the fic family. Homodimer.

Its subcellular location is the membrane. It carries out the reaction L-tyrosyl-[protein] + ATP = O-(5'-adenylyl)-L-tyrosyl-[protein] + diphosphate. The catalysed reaction is L-threonyl-[protein] + ATP = 3-O-(5'-adenylyl)-L-threonyl-[protein] + diphosphate. The enzyme catalyses 3-O-(5'-adenylyl)-L-threonyl-[protein] + H2O = L-threonyl-[protein] + AMP + H(+). Its activity is regulated as follows. The side chain of Glu-250 determines which of the two opposing activities (AMPylase or de-AMPylase) will take place. In response to endoplasmic reticulum stress, mediates de-AMPylase activity. Adenylyltransferase activity is inhibited by the inhibitory helix present at the N-terminus: Glu-250 binds ATP and competes with ATP-binding at Arg-389, thereby preventing adenylyltransferase activity. In unstressed cells, disengagement of Glu-250 promotes adenylyltransferase activity. Activation dissociates ATP-binding from Glu-250, allowing ordered binding of the entire ATP moiety with the alpha-phosphate in an orientation that is productive for accepting an incoming target hydroxyl side chain. Functionally, protein that can both mediate the addition of adenosine 5'-monophosphate (AMP) to specific residues of target proteins (AMPylation), and the removal of the same modification from target proteins (de-AMPylation), depending on the context. The side chain of Glu-250 determines which of the two opposing activities (AMPylase or de-AMPylase) will take place. Acts as a key regulator of the unfolded protein response (UPR) by mediating AMPylation or de-AMPylation of Hsc70-3/BiP. In unstressed cells, acts as an adenylyltransferase by mediating AMPylation of Hsc70-3/BiP at 'Thr-518', thereby inactivating it. In response to endoplasmic reticulum stress, acts as a phosphodiesterase by mediating removal of ATP (de-AMPylation) from Hsc70-3/BiP at 'Thr-518', leading to restore HSPA5/BiP activity. This Drosophila yakuba (Fruit fly) protein is Protein adenylyltransferase Fic.